The following is a 343-amino-acid chain: Uroporphyrinogen decarboxylase (343 aa).

Residues 25-29, aspartate 75, tyrosine 152, serine 207, and histidine 323 each bind substrate; that span reads RQAGR.

Belongs to the uroporphyrinogen decarboxylase family. As to quaternary structure, homodimer.

It is found in the cytoplasm. It carries out the reaction uroporphyrinogen III + 4 H(+) = coproporphyrinogen III + 4 CO2. The protein operates within porphyrin-containing compound metabolism; protoporphyrin-IX biosynthesis; coproporphyrinogen-III from 5-aminolevulinate: step 4/4. Functionally, catalyzes the decarboxylation of four acetate groups of uroporphyrinogen-III to yield coproporphyrinogen-III. In Jannaschia sp. (strain CCS1), this protein is Uroporphyrinogen decarboxylase.